Reading from the N-terminus, the 132-residue chain is N,N-dimethylformamidase alpha subunit (132 aa).

Heterotetramer of two DmfA1 (alpha) and two DmfA2 (beta) subunits.

The enzyme catalyses N,N-dimethylformamide + H2O = dimethylamine + formate. With respect to regulation, activity is slightly inhibited by Mg(2+) and Mn(2+), and slightly increased by Cu(2+). Activity is slightly inhibited by the chelating agents 8-hydroxyquinoline, ethylenediaminetetraacetate, o-phenanthroline and 2,2'-bipyridyl. Hydrolyzes N,N-dimethylformamide, and to a lesser extent N,N-dimethylacetamide and N,N-diethylacetamide. Has no activity against the substituted amides N-methylformamide, N-ethylformamide, N-ethylformamide and N-methylacetamide or the unsubstituted amides formamide, nicotinamide, acetoamide, benzamide, acetamide and acrylamide. The sequence is that of N,N-dimethylformamidase alpha subunit from Alcaligenes sp.